A 529-amino-acid chain; its full sequence is [Pyruvate dehydrogenase [acetyl-transferring]]-phosphatase 2, mitochondrial (529 aa).

The N-terminal 66 residues, 1–66, are a transit peptide targeting the mitochondrion; it reads MSSTVSYWIL…FTLCKAYRHT (66 aa). Positions 106–517 constitute a PPM-type phosphatase domain; that stretch reads VLRFESNQLA…DDITVTVVYF (412 aa). Residues D141, G142, D412, and D508 each contribute to the Mn(2+) site.

It belongs to the PP2C family. Mg(2+) is required as a cofactor.

The protein localises to the mitochondrion. It catalyses the reaction O-phospho-L-seryl-[pyruvate dehydrogenase E1 alpha subunit] + H2O = L-seryl-[pyruvate dehydrogenase E1 alpha subunit] + phosphate. Mitochondrial enzyme that catalyzes the dephosphorylation and concomitant reactivation of the alpha subunit of the E1 component of the pyruvate dehydrogenase complex (PDC), thereby stimulating the conversion of pyruvate into acetyl-CoA. Acts as a crucial regulator of T cell metabolism and function, with a particular focus on T-helper Th17. The sequence is that of [Pyruvate dehydrogenase [acetyl-transferring]]-phosphatase 2, mitochondrial from Homo sapiens (Human).